The chain runs to 524 residues: Phosphoenolpyruvate carboxykinase (ATP) (524 aa).

Positions 52, 188, and 194 each coordinate substrate. ATP-binding positions include Lys194, His213, and 229 to 237 (GLSGTGKTT). The Mn(2+) site is built by Lys194 and His213. Asp250 is a Mn(2+) binding site. Positions 278, 314, and 439 each coordinate ATP. Residue Arg314 coordinates substrate.

The protein belongs to the phosphoenolpyruvate carboxykinase (ATP) family. The cofactor is Mn(2+).

It localises to the cytoplasm. The catalysed reaction is oxaloacetate + ATP = phosphoenolpyruvate + ADP + CO2. It participates in carbohydrate biosynthesis; gluconeogenesis. In terms of biological role, involved in the gluconeogenesis. Catalyzes the conversion of oxaloacetate (OAA) to phosphoenolpyruvate (PEP) through direct phosphoryl transfer between the nucleoside triphosphate and OAA. The sequence is that of Phosphoenolpyruvate carboxykinase (ATP) from Campylobacter jejuni subsp. jejuni serotype O:23/36 (strain 81-176).